Here is a 500-residue protein sequence, read N- to C-terminus: Histidine--tRNA ligase (500 aa).

It belongs to the class-II aminoacyl-tRNA synthetase family. As to quaternary structure, homodimer.

It localises to the cytoplasm. The catalysed reaction is tRNA(His) + L-histidine + ATP = L-histidyl-tRNA(His) + AMP + diphosphate + H(+). This Mesorhizobium japonicum (strain LMG 29417 / CECT 9101 / MAFF 303099) (Mesorhizobium loti (strain MAFF 303099)) protein is Histidine--tRNA ligase (hisS).